An 89-amino-acid polypeptide reads, in one-letter code: Ixosin-B (89 aa).

A signal peptide spans 1 to 26 (MASGWTHRLLLLAAVVTLGATPIAAA). A propeptide spanning residues 27-57 (SMEYLVTAPGYLTPNADIKITAVVTNPSSAG) is cleaved from the precursor. Residues 68-89 (SGIQPEQHSSGKSDVRRWRSRY) are disordered. A compositionally biased stretch (basic and acidic residues) spans 76–89 (SSGKSDVRRWRSRY).

Has antifungal activity against C.albicans. Has antibacterial activity against the Gram-positive bacterium S.aureus and the Gram-negative bacterium E.coli. Lacks hemolytic activity against rabbit erythrocytes. In Ixodes sinensis (Hard tick), this protein is Ixosin-B.